The chain runs to 75 residues: Transcription attenuation protein MtrB (75 aa).

It belongs to the MtrB family. Oligomer of 11 identical subunits arranged in doughnut-like structure.

In terms of biological role, required for transcription attenuation control in the Trp operon. This trans-acting factor seems to recognize a 10 bases nucleotide sequence in the Trp leader transcript causing transcription termination. Binds the leader RNA only in presence of L-tryptophan. This is Transcription attenuation protein MtrB from Bacillus velezensis (strain DSM 23117 / BGSC 10A6 / LMG 26770 / FZB42) (Bacillus amyloliquefaciens subsp. plantarum).